Here is an 872-residue protein sequence, read N- to C-terminus: Alanine--tRNA ligase (872 aa).

4 residues coordinate Zn(2+): His567, His571, Cys669, and His673.

It belongs to the class-II aminoacyl-tRNA synthetase family. Requires Zn(2+) as cofactor.

The protein localises to the cytoplasm. It carries out the reaction tRNA(Ala) + L-alanine + ATP = L-alanyl-tRNA(Ala) + AMP + diphosphate. Catalyzes the attachment of alanine to tRNA(Ala) in a two-step reaction: alanine is first activated by ATP to form Ala-AMP and then transferred to the acceptor end of tRNA(Ala). Also edits incorrectly charged Ser-tRNA(Ala) and Gly-tRNA(Ala) via its editing domain. In Streptococcus pyogenes serotype M2 (strain MGAS10270), this protein is Alanine--tRNA ligase.